A 105-amino-acid polypeptide reads, in one-letter code: MNSSLDFLILILMFGGTSSNSVKQTGQITVSEGASVTMNCTYTSTGYPTLFWYVEYPSKPLQLLQRETMENSKNFGGGNIKDKNSPIVKYSVQVSDSAVYYCLLG.

The N-terminal stretch at 1–19 (MNSSLDFLILILMFGGTSS) is a signal peptide. The Ig-like domain occupies 20–105 (NSVKQTGQIT…DSAVYYCLLG (86 aa)). N-linked (GlcNAc...) asparagine glycosylation is present at Asn-39. The cysteines at positions 40 and 102 are disulfide-linked.

As to quaternary structure, alpha-beta TR is a heterodimer composed of an alpha and beta chain; disulfide-linked. The alpha-beta TR is associated with the transmembrane signaling CD3 coreceptor proteins to form the TR-CD3 (TcR or TCR). The assembly of alpha-beta TR heterodimers with CD3 occurs in the endoplasmic reticulum where a single alpha-beta TR heterodimer associates with one CD3D-CD3E heterodimer, one CD3G-CD3E heterodimer and one CD247 homodimer forming a stable octameric structure. CD3D-CD3E and CD3G-CD3E heterodimers preferentially associate with TR alpha and TR beta chains, respectively. The association of the CD247 homodimer is the last step of TcR assembly in the endoplasmic reticulum and is required for transport to the cell surface.

It is found in the cell membrane. In terms of biological role, v region of the variable domain of T cell receptor (TR) alpha chain that participates in the antigen recognition. Alpha-beta T cell receptors are antigen specific receptors which are essential to the immune response and are present on the cell surface of T lymphocytes. Recognize peptide-major histocompatibility (MH) (pMH) complexes that are displayed by antigen presenting cells (APC), a prerequisite for efficient T cell adaptive immunity against pathogens. Binding of alpha-beta TR to pMH complex initiates TR-CD3 clustering on the cell surface and intracellular activation of LCK that phosphorylates the ITAM motifs of CD3G, CD3D, CD3E and CD247 enabling the recruitment of ZAP70. In turn ZAP70 phosphorylates LAT, which recruits numerous signaling molecules to form the LAT signalosome. The LAT signalosome propagates signal branching to three major signaling pathways, the calcium, the mitogen-activated protein kinase (MAPK) kinase and the nuclear factor NF-kappa-B (NF-kB) pathways, leading to the mobilization of transcription factors that are critical for gene expression and essential for T cell growth and differentiation. The T cell repertoire is generated in the thymus, by V-(D)-J rearrangement. This repertoire is then shaped by intrathymic selection events to generate a peripheral T cell pool of self-MH restricted, non-autoaggressive T cells. Post-thymic interaction of alpha-beta TR with the pMH complexes shapes TR structural and functional avidity. In Homo sapiens (Human), this protein is T cell receptor alpha variable 40.